The sequence spans 317 residues: Heme-binding protein HMX1 (317 aa).

At 1-289 (MEDSSNTIIP…FNKDSATRRA (289 aa)) the chain is on the cytoplasmic side. Residues 290–310 (LHTVMLLVLSIIAIWVLYFLV) form a helical; Anchor for type IV membrane protein membrane-spanning segment.

The cofactor is heme.

It localises to the endoplasmic reticulum membrane. Its function is as follows. Plays an important role in the degradation of heme under conditions of iron deprivation. This Saccharomyces cerevisiae (strain ATCC 204508 / S288c) (Baker's yeast) protein is Heme-binding protein HMX1 (HMX1).